A 290-amino-acid chain; its full sequence is 4-diphosphocytidyl-2-C-methyl-D-erythritol kinase (290 aa).

Lysine 8 is a catalytic residue. Position 89-99 (89-99 (PIGAGVGGGSS)) interacts with ATP. Aspartate 131 is a catalytic residue.

The protein belongs to the GHMP kinase family. IspE subfamily.

The catalysed reaction is 4-CDP-2-C-methyl-D-erythritol + ATP = 4-CDP-2-C-methyl-D-erythritol 2-phosphate + ADP + H(+). Its pathway is isoprenoid biosynthesis; isopentenyl diphosphate biosynthesis via DXP pathway; isopentenyl diphosphate from 1-deoxy-D-xylulose 5-phosphate: step 3/6. Its function is as follows. Catalyzes the phosphorylation of the position 2 hydroxy group of 4-diphosphocytidyl-2C-methyl-D-erythritol. In Chlamydia felis (strain Fe/C-56) (Chlamydophila felis), this protein is 4-diphosphocytidyl-2-C-methyl-D-erythritol kinase.